Reading from the N-terminus, the 216-residue chain is Large ribosomal subunit protein uL3 (216 aa).

Residue Gln157 is modified to N5-methylglutamine.

This sequence belongs to the universal ribosomal protein uL3 family. In terms of assembly, part of the 50S ribosomal subunit. Forms a cluster with proteins L14 and L19. Methylated by PrmB.

Its function is as follows. One of the primary rRNA binding proteins, it binds directly near the 3'-end of the 23S rRNA, where it nucleates assembly of the 50S subunit. The chain is Large ribosomal subunit protein uL3 from Xanthomonas oryzae pv. oryzae (strain MAFF 311018).